The chain runs to 329 residues: MKNILQSTECLEDQQNVSIRPNLLDEFIGQSSVVNNLKIFINAAYTRKEPMDHVLLYGPPGLGKTTLAHIIAKELKVNFRSTAGPLLSKAGDLAAILTNLQAKDILFIDEIHRLNRNIEEILYSAMEDFCLDIIVGEGCGARTLRVDLPKFTLVGATTRIGLLSNPLRDRFGIPIHLEFYSTEELIKVIQRAAKVIKTDISDSGAQEISLRARGTPRIALRLLRRIRDFIEVTEHNKTITDTFADKALLRLGIDKLGLDRQDIQYLKFIHDSNNPTGIDTISSGLSEDTGNIEETIEPYLIKINFIQRTPRGRVITQKAISYLKEQSYI.

Residues 1–180 (MKNILQSTEC…FGIPIHLEFY (180 aa)) are large ATPase domain (RuvB-L). Residues Ile-19, Arg-20, Gly-61, Lys-64, Thr-65, Thr-66, 127–129 (EDF), Arg-170, Tyr-180, and Arg-217 contribute to the ATP site. Thr-65 serves as a coordination point for Mg(2+). The segment at 181–252 (STEELIKVIQ…FADKALLRLG (72 aa)) is small ATPAse domain (RuvB-S). Positions 255-329 (KLGLDRQDIQ…ISYLKEQSYI (75 aa)) are head domain (RuvB-H). 2 residues coordinate DNA: Arg-308 and Arg-313.

Belongs to the RuvB family. In terms of assembly, homohexamer. Forms an RuvA(8)-RuvB(12)-Holliday junction (HJ) complex. HJ DNA is sandwiched between 2 RuvA tetramers; dsDNA enters through RuvA and exits via RuvB. An RuvB hexamer assembles on each DNA strand where it exits the tetramer. Each RuvB hexamer is contacted by two RuvA subunits (via domain III) on 2 adjacent RuvB subunits; this complex drives branch migration. In the full resolvosome a probable DNA-RuvA(4)-RuvB(12)-RuvC(2) complex forms which resolves the HJ.

It is found in the cytoplasm. The enzyme catalyses ATP + H2O = ADP + phosphate + H(+). In terms of biological role, the RuvA-RuvB-RuvC complex processes Holliday junction (HJ) DNA during genetic recombination and DNA repair, while the RuvA-RuvB complex plays an important role in the rescue of blocked DNA replication forks via replication fork reversal (RFR). RuvA specifically binds to HJ cruciform DNA, conferring on it an open structure. The RuvB hexamer acts as an ATP-dependent pump, pulling dsDNA into and through the RuvAB complex. RuvB forms 2 homohexamers on either side of HJ DNA bound by 1 or 2 RuvA tetramers; 4 subunits per hexamer contact DNA at a time. Coordinated motions by a converter formed by DNA-disengaged RuvB subunits stimulates ATP hydrolysis and nucleotide exchange. Immobilization of the converter enables RuvB to convert the ATP-contained energy into a lever motion, pulling 2 nucleotides of DNA out of the RuvA tetramer per ATP hydrolyzed, thus driving DNA branch migration. The RuvB motors rotate together with the DNA substrate, which together with the progressing nucleotide cycle form the mechanistic basis for DNA recombination by continuous HJ branch migration. Branch migration allows RuvC to scan DNA until it finds its consensus sequence, where it cleaves and resolves cruciform DNA. The polypeptide is Holliday junction branch migration complex subunit RuvB (Ehrlichia canis (strain Jake)).